Consider the following 603-residue polypeptide: Protein US26 (603 aa).

Over residues 496 to 513 (EEEDQEEDDTSDDDDQEK) the composition is skewed to acidic residues. 2 disordered regions span residues 496–536 (EEED…GSLE) and 549–568 (AVAE…DTAQ). Positions 517 to 533 (NPQNNIGSLTRTPSSPG) are enriched in polar residues.

It belongs to the herpesviridae US22 family.

In Human cytomegalovirus (strain Merlin) (HHV-5), this protein is Protein US26 (US26).